The chain runs to 384 residues: UDP-galactopyranose mutase (384 aa).

The signal sequence occupies residues 1-23 (MKSKKILIVGAGFSGAVIGRQLA). FAD is bound by residues Ser14, 33-34 (DQ), Asn41, and 60-61 (HI). The UDP-alpha-D-galactose site is built by Asn84, Phe151, Thr156, Trp160, and Tyr185. Phe219 provides a ligand contact to FAD. Residues Asn270, Arg280, and Tyr314 each coordinate UDP-alpha-D-galactose. Arg343 lines the FAD pocket. Residue Tyr349 participates in UDP-alpha-D-galactose binding. 350 to 355 (LDMDVT) contacts FAD.

The protein belongs to the UDP-galactopyranose/dTDP-fucopyranose mutase family. In terms of assembly, homodimer. FAD is required as a cofactor.

The catalysed reaction is UDP-alpha-D-galactose = UDP-alpha-D-galactofuranose. The protein operates within bacterial outer membrane biogenesis; LPS O-antigen biosynthesis. Functionally, involved in the biosynthesis of the galactose-containing O-side-chain polysaccharide backbone structure of D-galactan I which is a key component of lipopolysaccharide (LPS). Catalyzes the interconversion through a 2-keto intermediate of uridine diphosphogalactopyranose (UDP-GalP) into uridine diphosphogalactofuranose (UDP-GalF) which is the biosynthetic precursor of galactofuranosyl residues. In Klebsiella pneumoniae, this protein is UDP-galactopyranose mutase (rfbD).